The primary structure comprises 413 residues: Probable cysteine desulfurase (413 aa).

Position 229 is an N6-(pyridoxal phosphate)lysine (lysine 229). Cysteine 368 acts as the Cysteine persulfide intermediate in catalysis.

It belongs to the class-V pyridoxal-phosphate-dependent aminotransferase family. Csd subfamily. Pyridoxal 5'-phosphate is required as a cofactor.

The catalysed reaction is (sulfur carrier)-H + L-cysteine = (sulfur carrier)-SH + L-alanine. Functionally, catalyzes the removal of elemental sulfur and selenium atoms from L-cysteine, L-cystine, L-selenocysteine, and L-selenocystine to produce L-alanine. This is Probable cysteine desulfurase (csd) from Staphylococcus epidermidis (strain ATCC 12228 / FDA PCI 1200).